A 297-amino-acid polypeptide reads, in one-letter code: ER membrane protein complex subunit 2-A (297 aa).

TPR repeat units lie at residues 87–120 (HRVK…DPTN), 155–188 (QEAW…NPHN), and 192–225 (YQQF…NNHN).

This sequence belongs to the EMC2 family. Component of the ER membrane protein complex (EMC).

The protein localises to the endoplasmic reticulum membrane. Part of the endoplasmic reticulum membrane protein complex (EMC) that enables the energy-independent insertion into endoplasmic reticulum membranes of newly synthesized membrane proteins. Preferentially accommodates proteins with transmembrane domains that are weakly hydrophobic or contain destabilizing features such as charged and aromatic residues. Involved in the cotranslational insertion of multi-pass membrane proteins in which stop-transfer membrane-anchor sequences become ER membrane spanning helices. It is also required for the post-translational insertion of tail-anchored/TA proteins in endoplasmic reticulum membranes. By mediating the proper cotranslational insertion of N-terminal transmembrane domains in an N-exo topology, with translocated N-terminus in the lumen of the ER, controls the topology of multi-pass membrane proteins. By regulating the insertion of various proteins in membranes, it is indirectly involved in many cellular processes. This is ER membrane protein complex subunit 2-A (emc2-a) from Xenopus laevis (African clawed frog).